A 396-amino-acid chain; its full sequence is Succinyl-diaminopimelate desuccinylase (396 aa).

Zn(2+) is bound at residue His74. Asp76 is an active-site residue. Asp107 provides a ligand contact to Zn(2+). Residue Glu142 is the Proton acceptor of the active site. Residues Glu143, Glu171, and His360 each contribute to the Zn(2+) site.

It belongs to the peptidase M20A family. DapE subfamily. Homodimer. It depends on Zn(2+) as a cofactor. The cofactor is Co(2+).

The catalysed reaction is N-succinyl-(2S,6S)-2,6-diaminopimelate + H2O = (2S,6S)-2,6-diaminopimelate + succinate. The protein operates within amino-acid biosynthesis; L-lysine biosynthesis via DAP pathway; LL-2,6-diaminopimelate from (S)-tetrahydrodipicolinate (succinylase route): step 3/3. Catalyzes the hydrolysis of N-succinyl-L,L-diaminopimelic acid (SDAP), forming succinate and LL-2,6-diaminopimelate (DAP), an intermediate involved in the bacterial biosynthesis of lysine and meso-diaminopimelic acid, an essential component of bacterial cell walls. The polypeptide is Succinyl-diaminopimelate desuccinylase (Methylobacterium sp. (strain 4-46)).